Consider the following 264-residue polypeptide: Thymidylate synthase (264 aa).

Arg21 provides a ligand contact to dUMP. His51 is a (6R)-5,10-methylene-5,6,7,8-tetrahydrofolate binding site. 126–127 (RR) serves as a coordination point for dUMP. The active-site Nucleophile is the Cys146. DUMP-binding positions include 166–169 (RSCD), Asn177, and 207–209 (HLY). A (6R)-5,10-methylene-5,6,7,8-tetrahydrofolate-binding site is contributed by Asp169. (6R)-5,10-methylene-5,6,7,8-tetrahydrofolate is bound at residue Ser263.

Belongs to the thymidylate synthase family. Bacterial-type ThyA subfamily. Homodimer.

It localises to the cytoplasm. The catalysed reaction is dUMP + (6R)-5,10-methylene-5,6,7,8-tetrahydrofolate = 7,8-dihydrofolate + dTMP. The protein operates within pyrimidine metabolism; dTTP biosynthesis. Catalyzes the reductive methylation of 2'-deoxyuridine-5'-monophosphate (dUMP) to 2'-deoxythymidine-5'-monophosphate (dTMP) while utilizing 5,10-methylenetetrahydrofolate (mTHF) as the methyl donor and reductant in the reaction, yielding dihydrofolate (DHF) as a by-product. This enzymatic reaction provides an intracellular de novo source of dTMP, an essential precursor for DNA biosynthesis. This Buchnera aphidicola subsp. Acyrthosiphon pisum (strain Tuc7) protein is Thymidylate synthase.